The sequence spans 124 residues: S-adenosylmethionine decarboxylase proenzyme (124 aa).

Serine 63 acts as the Schiff-base intermediate with substrate; via pyruvic acid in catalysis. Serine 63 carries the post-translational modification Pyruvic acid (Ser); by autocatalysis. Histidine 68 functions as the Proton acceptor; for processing activity in the catalytic mechanism. Catalysis depends on cysteine 83, which acts as the Proton donor; for catalytic activity.

The protein belongs to the prokaryotic AdoMetDC family. Type 1 subfamily. In terms of assembly, heterotetramer of two alpha and two beta chains arranged as a dimer of alpha/beta heterodimers. Pyruvate serves as cofactor. In terms of processing, is synthesized initially as an inactive proenzyme. Formation of the active enzyme involves a self-maturation process in which the active site pyruvoyl group is generated from an internal serine residue via an autocatalytic post-translational modification. Two non-identical subunits are generated from the proenzyme in this reaction, and the pyruvate is formed at the N-terminus of the alpha chain, which is derived from the carboxyl end of the proenzyme. The post-translation cleavage follows an unusual pathway, termed non-hydrolytic serinolysis, in which the side chain hydroxyl group of the serine supplies its oxygen atom to form the C-terminus of the beta chain, while the remainder of the serine residue undergoes an oxidative deamination to produce ammonia and the pyruvoyl group blocking the N-terminus of the alpha chain.

The enzyme catalyses S-adenosyl-L-methionine + H(+) = S-adenosyl 3-(methylsulfanyl)propylamine + CO2. It participates in amine and polyamine biosynthesis; S-adenosylmethioninamine biosynthesis; S-adenosylmethioninamine from S-adenosyl-L-methionine: step 1/1. In terms of biological role, catalyzes the decarboxylation of S-adenosylmethionine to S-adenosylmethioninamine (dcAdoMet), the propylamine donor required for the synthesis of the polyamines spermine and spermidine from the diamine putrescine. The sequence is that of S-adenosylmethionine decarboxylase proenzyme from Anoxybacillus flavithermus (strain DSM 21510 / WK1).